We begin with the raw amino-acid sequence, 823 residues long: Putative ankyrin repeat domain-containing protein 20A3 (823 aa).

ANK repeat units follow at residues 66–95, 99–128, 132–161, 165–194, and 198–227; these read QHRTALHLACASGHVQVVTLLVNRKCQIDV, ENRTPLIQAVHCQEEACAVILLEHGANPNL, YGNTALHYAVYSESTSLAEKLLSHGAHIEA, DNNTPLLFAIICKKEKMVEFLLKRKASSHA, and LRRSALMLAVYYDSPGIVNILLKQNIDVFA. Disordered regions lie at residues 301 to 343 and 355 to 402; these read VPEK…EVED and VQTL…LSEN. A compositionally biased stretch (basic and acidic residues) spans 372–384; that stretch reads QERHERSEKKQPQ. Coiled-coil stretches lie at residues 431-480, 571-724, and 776-805; these read KKLK…KQLE, AFRY…NNST, and LVLEEKSKKLMNECDHLKESLFQYEREKTE.

This Homo sapiens (Human) protein is Putative ankyrin repeat domain-containing protein 20A3.